The chain runs to 311 residues: Methionyl-tRNA formyltransferase (311 aa).

Serine 112 to proline 115 is a binding site for (6S)-5,6,7,8-tetrahydrofolate.

It belongs to the Fmt family.

It catalyses the reaction L-methionyl-tRNA(fMet) + (6R)-10-formyltetrahydrofolate = N-formyl-L-methionyl-tRNA(fMet) + (6S)-5,6,7,8-tetrahydrofolate + H(+). In terms of biological role, attaches a formyl group to the free amino group of methionyl-tRNA(fMet). The formyl group appears to play a dual role in the initiator identity of N-formylmethionyl-tRNA by promoting its recognition by IF2 and preventing the misappropriation of this tRNA by the elongation apparatus. The protein is Methionyl-tRNA formyltransferase of Bradyrhizobium diazoefficiens (strain JCM 10833 / BCRC 13528 / IAM 13628 / NBRC 14792 / USDA 110).